The following is a 127-amino-acid chain: Holo-[acyl-carrier-protein] synthase (127 aa).

Residues Asp-9 and Glu-58 each coordinate Mg(2+).

This sequence belongs to the P-Pant transferase superfamily. AcpS family. Requires Mg(2+) as cofactor.

It localises to the cytoplasm. It catalyses the reaction apo-[ACP] + CoA = holo-[ACP] + adenosine 3',5'-bisphosphate + H(+). Functionally, transfers the 4'-phosphopantetheine moiety from coenzyme A to a Ser of acyl-carrier-protein. The sequence is that of Holo-[acyl-carrier-protein] synthase from Shewanella baltica (strain OS185).